A 787-amino-acid chain; its full sequence is Patatin-like phospholipase domain-containing protein OOU_Y34scaffold00095g16.3 (787 aa).

Disordered stretches follow at residues 47–69 and 137–164; these read APDT…ARSF and KVVG…PGRR. Positions 59-69 are enriched in low complexity; the sequence is ASPRSPSARSF. Positions 144–157 are enriched in basic residues; it reads HRQKKSSRRRKRSK. The helical transmembrane segment at 180-200 threads the bilayer; it reads WPFLLIVGAWIVGLAVTYLFT. In terms of domain architecture, PNPLA spans 375 to 566; sequence LCLSGGASFA…RTDIPIRALN (192 aa). Residues 406–410 carry the GXSXG motif; it reads GTSGG. The active-site Nucleophile is the serine 408. Aspartate 553 functions as the Proton acceptor in the catalytic mechanism. Positions 745–787 are disordered; the sequence is GTDEEITTNDEMEFASDEKAVLTEDEGQFDGVTDNTEGSPLLK. Residues 746 to 759 show a composition bias toward acidic residues; that stretch reads TDEEITTNDEMEFA. Over residues 777-787 the composition is skewed to polar residues; it reads TDNTEGSPLLK.

The protein belongs to the PLPL family.

Its subcellular location is the membrane. Probable lipid hydrolase. In Pyricularia oryzae (strain Y34) (Rice blast fungus), this protein is Patatin-like phospholipase domain-containing protein OOU_Y34scaffold00095g16.3.